Here is a 458-residue protein sequence, read N- to C-terminus: ATP synthase subunit beta (458 aa).

Residue glycine 148–threonine 155 participates in ATP binding.

Belongs to the ATPase alpha/beta chains family. As to quaternary structure, F-type ATPases have 2 components, CF(1) - the catalytic core - and CF(0) - the membrane proton channel. CF(1) has five subunits: alpha(3), beta(3), gamma(1), delta(1), epsilon(1). CF(0) has three main subunits: a(1), b(2) and c(9-12). The alpha and beta chains form an alternating ring which encloses part of the gamma chain. CF(1) is attached to CF(0) by a central stalk formed by the gamma and epsilon chains, while a peripheral stalk is formed by the delta and b chains.

It is found in the cell inner membrane. It catalyses the reaction ATP + H2O + 4 H(+)(in) = ADP + phosphate + 5 H(+)(out). Functionally, produces ATP from ADP in the presence of a proton gradient across the membrane. The catalytic sites are hosted primarily by the beta subunits. The chain is ATP synthase subunit beta from Halorhodospira halophila (strain DSM 244 / SL1) (Ectothiorhodospira halophila (strain DSM 244 / SL1)).